The chain runs to 261 residues: Small ribosomal subunit protein eS1z (261 aa).

The segment covering 1 to 18 has biased composition (basic residues); it reads MAVGKNKRISKGKKGGKK. The interval 1–20 is disordered; the sequence is MAVGKNKRISKGKKGGKKKA.

Belongs to the eukaryotic ribosomal protein eS1 family. As to quaternary structure, component of the small ribosomal subunit. Mature ribosomes consist of a small (40S) and a large (60S) subunit. The 40S subunit contains about 33 different proteins and 1 molecule of RNA (18S). The 60S subunit contains about 49 different proteins and 3 molecules of RNA (25S, 5.8S and 5S).

It localises to the cytoplasm. The chain is Small ribosomal subunit protein eS1z from Vitis vinifera (Grape).